Here is a 228-residue protein sequence, read N- to C-terminus: Probable methylthioribulose-1-phosphate dehydratase (228 aa).

Cys87 provides a ligand contact to substrate. 2 residues coordinate Zn(2+): His105 and His107. Glu129 serves as the catalytic Proton donor/acceptor. His185 is a Zn(2+) binding site.

This sequence belongs to the aldolase class II family. MtnB subfamily. Zn(2+) serves as cofactor.

It is found in the cytoplasm. It carries out the reaction 5-(methylsulfanyl)-D-ribulose 1-phosphate = 5-methylsulfanyl-2,3-dioxopentyl phosphate + H2O. Its pathway is amino-acid biosynthesis; L-methionine biosynthesis via salvage pathway; L-methionine from S-methyl-5-thio-alpha-D-ribose 1-phosphate: step 2/6. Catalyzes the dehydration of methylthioribulose-1-phosphate (MTRu-1-P) into 2,3-diketo-5-methylthiopentyl-1-phosphate (DK-MTP-1-P). The polypeptide is Probable methylthioribulose-1-phosphate dehydratase (Drosophila willistoni (Fruit fly)).